Consider the following 147-residue polypeptide: Transthyretin (147 aa).

The N-terminal stretch at 1-20 is a signal peptide; sequence MASLRLFLLCLAGLIFASEA. At cysteine 30 the chain carries Sulfocysteine. L-thyroxine is bound at residue lysine 35. Glutamate 62 bears the 4-carboxyglutamate mark. At serine 72 the chain carries Phosphoserine. Glutamate 74 contacts L-thyroxine. N-linked (GlcNAc...) asparagine glycosylation occurs at asparagine 118. Serine 137 is a binding site for L-thyroxine.

It belongs to the transthyretin family. As to quaternary structure, homotetramer. Dimer of dimers. In the homotetramer, subunits assemble around a central channel that can accommodate two ligand molecules. Interacts with RBP4. Post-translationally, sulfonation of the reactive cysteine Cys-30 enhances the stability of the native conformation of TTR, avoiding misassembly of the protein leading to amyloid formation. Detected in serum and cerebrospinal fluid (at protein level). Highly expressed in the choroid plexus. Detected at lower levels in the liver.

Its subcellular location is the secreted. Thyroid hormone-binding protein. Probably transports thyroxine from the bloodstream to the brain. The polypeptide is Transthyretin (Ttr) (Rattus norvegicus (Rat)).